We begin with the raw amino-acid sequence, 427 residues long: Adenylosuccinate synthetase (427 aa).

GTP is bound by residues Gly12–Lys18 and Gly40–Thr42. The active-site Proton acceptor is the Asp13. Mg(2+) contacts are provided by Asp13 and Gly40. IMP-binding positions include Asp13–Lys16, Asn38–His41, Thr127, Arg141, Gln222, Thr237, and Arg301. His41 serves as the catalytic Proton donor. Residue Val297–Arg303 participates in substrate binding. GTP-binding positions include Arg303, Ser329–Asp331, and Ala411–Gly413.

Belongs to the adenylosuccinate synthetase family. Homodimer. It depends on Mg(2+) as a cofactor.

It is found in the cytoplasm. It carries out the reaction IMP + L-aspartate + GTP = N(6)-(1,2-dicarboxyethyl)-AMP + GDP + phosphate + 2 H(+). Its pathway is purine metabolism; AMP biosynthesis via de novo pathway; AMP from IMP: step 1/2. In terms of biological role, plays an important role in the de novo pathway of purine nucleotide biosynthesis. Catalyzes the first committed step in the biosynthesis of AMP from IMP. The chain is Adenylosuccinate synthetase from Leuconostoc mesenteroides subsp. mesenteroides (strain ATCC 8293 / DSM 20343 / BCRC 11652 / CCM 1803 / JCM 6124 / NCDO 523 / NBRC 100496 / NCIMB 8023 / NCTC 12954 / NRRL B-1118 / 37Y).